We begin with the raw amino-acid sequence, 350 residues long: 3-isopropylmalate dehydrogenase (350 aa).

76-87 (GPKWDNAPKRPE) serves as a coordination point for NAD(+). Substrate is bound by residues Arg94, Arg104, Arg132, and Asp217. Asp217, Asp241, and Asp245 together coordinate Mg(2+). NAD(+) is bound at residue 275 to 287 (GSAPDIANQNIAN).

It belongs to the isocitrate and isopropylmalate dehydrogenases family. LeuB type 1 subfamily. In terms of assembly, homodimer. It depends on Mg(2+) as a cofactor. The cofactor is Mn(2+).

The protein resides in the cytoplasm. The enzyme catalyses (2R,3S)-3-isopropylmalate + NAD(+) = 4-methyl-2-oxopentanoate + CO2 + NADH. It participates in amino-acid biosynthesis; L-leucine biosynthesis; L-leucine from 3-methyl-2-oxobutanoate: step 3/4. Catalyzes the oxidation of 3-carboxy-2-hydroxy-4-methylpentanoate (3-isopropylmalate) to 3-carboxy-4-methyl-2-oxopentanoate. The product decarboxylates to 4-methyl-2 oxopentanoate. The chain is 3-isopropylmalate dehydrogenase from Listeria monocytogenes serotype 4b (strain F2365).